The following is a 234-amino-acid chain: ATP-dependent dethiobiotin synthetase BioD (234 aa).

An ATP-binding site is contributed by 14–19 (GVGKTI). Position 18 (T18) interacts with Mg(2+). K39 is a catalytic residue. S43 is a binding site for substrate. ATP-binding positions include D56, 118-121 (EGAG), 178-179 (NH), and 208-210 (PWL). Mg(2+)-binding residues include D56 and E118.

It belongs to the dethiobiotin synthetase family. Homodimer. Requires Mg(2+) as cofactor.

It is found in the cytoplasm. It catalyses the reaction (7R,8S)-7,8-diammoniononanoate + CO2 + ATP = (4R,5S)-dethiobiotin + ADP + phosphate + 3 H(+). The protein operates within cofactor biosynthesis; biotin biosynthesis; biotin from 7,8-diaminononanoate: step 1/2. Functionally, catalyzes a mechanistically unusual reaction, the ATP-dependent insertion of CO2 between the N7 and N8 nitrogen atoms of 7,8-diaminopelargonic acid (DAPA, also called 7,8-diammoniononanoate) to form a ureido ring. The polypeptide is ATP-dependent dethiobiotin synthetase BioD (Marinobacter nauticus (strain ATCC 700491 / DSM 11845 / VT8) (Marinobacter aquaeolei)).